The sequence spans 1940 residues: Myosin-2 (1940 aa).

The 50-residue stretch at 33–82 (DAKTSVFVAEPKESFVKGTIQSREGGKVTVKTEGGATLTVKEDQVFPMNP) folds into the Myosin N-terminal SH3-like domain. Thr64 and Thr69 each carry phosphothreonine. One can recognise a Myosin motor domain in the interval 86–783 (DKIEDMAMMT…LLGLLEEMRD (698 aa)). Lys130 carries the N6,N6,N6-trimethyllysine modification. Residue 179-186 (GESGAGKT) coordinates ATP. Residue Tyr389 is modified to Phosphotyrosine. Ser392 is modified (phosphoserine). Thr419 carries the phosphothreonine modification. Ser625 bears the Phosphoserine mark. The segment at 660–682 (LNKLMTNLRSTHPHFVRCIIPNE) is actin-binding. The residue at position 758 (His758) is a Pros-methylhistidine. The interval 762–776 (KFGHTKVFFKAGLLG) is actin-binding. In terms of domain architecture, IQ spans 786-815 (LAQLMTRTQARCRGFLARVEYQKMVERRES). Positions 844-1940 (LLKSAETEKE…EVHTKIISEE (1097 aa)) form a coiled coil. Phosphoserine occurs at positions 1093, 1097, 1163, and 1238. Residue Thr1242 is modified to Phosphothreonine. Position 1244 is a phosphoserine (Ser1244). Phosphothreonine occurs at positions 1256 and 1287. Phosphoserine occurs at positions 1289, 1293, 1304, and 1307. Residue Tyr1465 is modified to Phosphotyrosine. A Phosphothreonine modification is found at Thr1468. A Phosphotyrosine modification is found at Tyr1493. Ser1496 bears the Phosphoserine mark. Thr1502 is modified (phosphothreonine). Ser1515 bears the Phosphoserine mark. At Thr1518 the chain carries Phosphothreonine. A phosphoserine mark is found at Ser1543, Ser1555, Ser1575, Ser1601, Ser1715, and Ser1727. Thr1731 and Thr1737 each carry phosphothreonine. The segment at 1886–1905 (QAEEAEEQSNTNLSKFRKLQ) is disordered.

This sequence belongs to the TRAFAC class myosin-kinesin ATPase superfamily. Myosin family. In terms of assembly, muscle myosin is a hexameric protein that consists of 2 heavy chain subunits (MHC), 2 alkali light chain subunits (MLC) and 2 regulatory light chain subunits (MLC-2). Interacts with GCSAM.

The protein resides in the cytoplasm. It localises to the myofibril. Its function is as follows. Myosins are actin-based motor molecules with ATPase activity essential for muscle contraction. This chain is Myosin-2 (MYH2), found in Bos taurus (Bovine).